The chain runs to 208 residues: 3-demethoxyubiquinol 3-hydroxylase (208 aa).

Residues Glu-57, Glu-87, His-90, Glu-139, Glu-171, and His-174 each contribute to the Fe cation site.

This sequence belongs to the COQ7 family. Fe cation is required as a cofactor.

The protein resides in the cell membrane. It carries out the reaction a 5-methoxy-2-methyl-3-(all-trans-polyprenyl)benzene-1,4-diol + AH2 + O2 = a 3-demethylubiquinol + A + H2O. It participates in cofactor biosynthesis; ubiquinone biosynthesis. In terms of biological role, catalyzes the hydroxylation of 2-nonaprenyl-3-methyl-6-methoxy-1,4-benzoquinol during ubiquinone biosynthesis. The sequence is that of 3-demethoxyubiquinol 3-hydroxylase from Nitrosomonas eutropha (strain DSM 101675 / C91 / Nm57).